Here is a 224-residue protein sequence, read N- to C-terminus: Flagellar L-ring protein (224 aa).

A signal peptide spans methionine 1 to alanine 15. The N-palmitoyl cysteine moiety is linked to residue cysteine 16. Residue cysteine 16 is the site of S-diacylglycerol cysteine attachment.

The protein belongs to the FlgH family. As to quaternary structure, the basal body constitutes a major portion of the flagellar organelle and consists of four rings (L,P,S, and M) mounted on a central rod.

It is found in the cell outer membrane. The protein resides in the bacterial flagellum basal body. Assembles around the rod to form the L-ring and probably protects the motor/basal body from shearing forces during rotation. The polypeptide is Flagellar L-ring protein (Shewanella baltica (strain OS223)).